Reading from the N-terminus, the 100-residue chain is MIPLQHGLILAAILFVLGLTGLIIRRNLLFMLIGLEVMINAAALAFVVVGSYWGQPDGQVMFILAISLAAAEASIGLALLLQLYRRRQNLNIDTVSEMRG.

Transmembrane regions (helical) follow at residues 4-24 (LQHGLILAAILFVLGLTGLII), 29-49 (LFMLIGLEVMINAAALAFVVV), and 60-80 (VMFILAISLAAAEASIGLALL).

Belongs to the complex I subunit 4L family. As to quaternary structure, NDH-1 is composed of 13 different subunits. Subunits NuoA, H, J, K, L, M, N constitute the membrane sector of the complex.

It localises to the cell inner membrane. The catalysed reaction is a quinone + NADH + 5 H(+)(in) = a quinol + NAD(+) + 4 H(+)(out). Its function is as follows. NDH-1 shuttles electrons from NADH, via FMN and iron-sulfur (Fe-S) centers, to quinones in the respiratory chain. The immediate electron acceptor for the enzyme in this species is believed to be ubiquinone. Couples the redox reaction to proton translocation (for every two electrons transferred, four hydrogen ions are translocated across the cytoplasmic membrane), and thus conserves the redox energy in a proton gradient. The polypeptide is NADH-quinone oxidoreductase subunit K (Photorhabdus laumondii subsp. laumondii (strain DSM 15139 / CIP 105565 / TT01) (Photorhabdus luminescens subsp. laumondii)).